Reading from the N-terminus, the 333-residue chain is DNA-directed RNA polymerase subunit alpha (333 aa).

Residues 1–234 (MQSSVNEFLT…QQLAAFVDLK (234 aa)) are alpha N-terminal domain (alpha-NTD). The segment at 248-333 (IDPILLRPVD…SLKKDDKATA (86 aa)) is alpha C-terminal domain (alpha-CTD).

It belongs to the RNA polymerase alpha chain family. Homodimer. The RNAP catalytic core consists of 2 alpha, 1 beta, 1 beta' and 1 omega subunit. When a sigma factor is associated with the core the holoenzyme is formed, which can initiate transcription.

The catalysed reaction is RNA(n) + a ribonucleoside 5'-triphosphate = RNA(n+1) + diphosphate. Its function is as follows. DNA-dependent RNA polymerase catalyzes the transcription of DNA into RNA using the four ribonucleoside triphosphates as substrates. This chain is DNA-directed RNA polymerase subunit alpha, found in Stutzerimonas stutzeri (strain A1501) (Pseudomonas stutzeri).